Reading from the N-terminus, the 185-residue chain is Elongation factor P (185 aa).

It belongs to the elongation factor P family.

It is found in the cytoplasm. It functions in the pathway protein biosynthesis; polypeptide chain elongation. Its function is as follows. Involved in peptide bond synthesis. Stimulates efficient translation and peptide-bond synthesis on native or reconstituted 70S ribosomes in vitro. Probably functions indirectly by altering the affinity of the ribosome for aminoacyl-tRNA, thus increasing their reactivity as acceptors for peptidyl transferase. The chain is Elongation factor P from Mesoplasma florum (strain ATCC 33453 / NBRC 100688 / NCTC 11704 / L1) (Acholeplasma florum).